A 709-amino-acid chain; its full sequence is Heme/hemopexin utilization protein C (709 aa).

Residues Met-1–Ala-21 form the signal peptide. One can recognise a TBDR plug domain in the interval Asp-36–Pro-147. In terms of domain architecture, TBDR beta-barrel spans Lys-158–Phe-709. Positions Ser-692–Phe-709 match the TonB C-terminal box motif.

It belongs to the TonB-dependent receptor family.

It localises to the cell outer membrane. Functionally, required for utilization of free heme at low concentrations. The chain is Heme/hemopexin utilization protein C (hxuC) from Haemophilus influenzae (strain 86-028NP).